A 232-amino-acid chain; its full sequence is Orotidine 5'-phosphate decarboxylase (232 aa).

Residues Asp13, Lys35, Asp62–Thr71, Thr121, Arg182, Gln191, Gly211, and Arg212 each bind substrate. Lys64 (proton donor) is an active-site residue.

Belongs to the OMP decarboxylase family. Type 1 subfamily. As to quaternary structure, homodimer.

The catalysed reaction is orotidine 5'-phosphate + H(+) = UMP + CO2. The protein operates within pyrimidine metabolism; UMP biosynthesis via de novo pathway; UMP from orotate: step 2/2. Catalyzes the decarboxylation of orotidine 5'-monophosphate (OMP) to uridine 5'-monophosphate (UMP). The sequence is that of Orotidine 5'-phosphate decarboxylase from Acinetobacter baumannii (strain AB0057).